The sequence spans 630 residues: Pro-interleukin-16 (630 aa).

2 disordered regions span residues glutamate 30 to threonine 268 and proline 316 to threonine 343. The segment covering isoleucine 129–serine 143 has biased composition (low complexity). At serine 220 the chain carries Phosphoserine. A compositionally biased stretch (polar residues) spans serine 321 to threonine 343. The interaction with PPP1R12A, PPP1R12B and PPP1R12C stretch occupies residues lysine 404–serine 500. PDZ domains are found at residues histidine 410–lysine 495 and threonine 532–lysine 617.

In terms of assembly, homotetramer. Pro-interleukin-16 interacts (via PDZ 2 domain) with PPP1R12A, PPP1R12B and PPP1R12C. Pro-interleukin-16 interacts with GRIN2A. Pro-interleukin-16 interacts with GABPB1. Pro-interleukin-16 interacts (via PDZ 3 domain) with HDAC3.

It is found in the secreted. The protein resides in the cytoplasm. Its subcellular location is the nucleus. Interleukin-16 stimulates a migratory response in CD4+ lymphocytes, monocytes, and eosinophils. Primes CD4+ T-cells for IL-2 and IL-15 responsiveness. Also induces T-lymphocyte expression of interleukin 2 receptor. Ligand for CD4. In terms of biological role, pro-interleukin-16 is involved in cell cycle progression in T-cells. Appears to be involved in transcriptional regulation of SKP2 and is probably part of a transcriptional repression complex on the core promoter of the SKP2 gene. May act as a scaffold for GABPB1 (the DNA-binding subunit the GABP transcription factor complex) and HDAC3 thus maintaining transcriptional repression and blocking cell cycle progression in resting T-cells. The chain is Pro-interleukin-16 (IL16) from Macaca fascicularis (Crab-eating macaque).